Here is a 146-residue protein sequence, read N- to C-terminus: Ribonuclease H (146 aa).

Residues 1-141 (MKHVDIFTDG…ADELARKGME (141 aa)) enclose the RNase H type-1 domain. 4 residues coordinate Mg(2+): aspartate 9, glutamate 47, aspartate 69, and aspartate 133. A disordered region spans residues 123-146 (HAGHPENERADELARKGMEPFKRR). Positions 125 to 146 (GHPENERADELARKGMEPFKRR) are enriched in basic and acidic residues.

This sequence belongs to the RNase H family. Monomer. It depends on Mg(2+) as a cofactor.

The protein localises to the cytoplasm. It catalyses the reaction Endonucleolytic cleavage to 5'-phosphomonoester.. In terms of biological role, endonuclease that specifically degrades the RNA of RNA-DNA hybrids. This chain is Ribonuclease H, found in Agrobacterium fabrum (strain C58 / ATCC 33970) (Agrobacterium tumefaciens (strain C58)).